A 1024-amino-acid chain; its full sequence is Beta-galactosidase (1024 aa).

Asn-103 and Asp-202 together coordinate substrate. Asp-202 is a binding site for Na(+). Residues Glu-417, His-419, and Glu-462 each coordinate Mg(2+). Substrate contacts are provided by residues Glu-462 and 538–541 (EYAH). Residue Glu-462 is the Proton donor of the active site. Glu-538 functions as the Nucleophile in the catalytic mechanism. Asn-598 contributes to the Mg(2+) binding site. Positions 602 and 605 each coordinate Na(+). Positions 605 and 1000 each coordinate substrate.

The protein belongs to the glycosyl hydrolase 2 family. Homotetramer. Mg(2+) serves as cofactor. Requires Na(+) as cofactor.

The enzyme catalyses Hydrolysis of terminal non-reducing beta-D-galactose residues in beta-D-galactosides.. This Escherichia coli (strain SMS-3-5 / SECEC) protein is Beta-galactosidase.